We begin with the raw amino-acid sequence, 319 residues long: Cobalamin biosynthesis protein CbiB (319 aa).

The next 5 membrane-spanning stretches (helical) occupy residues 56–76 (VMWVVVVGATWGVAWGVLALA), 82–102 (WFGWSVEVWMIFTTLAGRSLA), 153–173 (VDGIIAPLFFLFLGGAPLAMA), 204–224 (VANYLPARLSWLLLGIAAGLC), and 296–316 (LMWVASTLALALFIAARCGLS).

It belongs to the CobD/CbiB family.

The protein localises to the cell membrane. It participates in cofactor biosynthesis; adenosylcobalamin biosynthesis. Its function is as follows. Converts cobyric acid to cobinamide by the addition of aminopropanol on the F carboxylic group. However, the true cosubstrate could be (R)-1-amino-2-propanol O-2-phosphate, leading to cobinamide phosphate. The sequence is that of Cobalamin biosynthesis protein CbiB from Salmonella paratyphi B (strain ATCC BAA-1250 / SPB7).